The chain runs to 365 residues: 3-dehydroquinate synthase (365 aa).

Residues 106–110 (GVIGD), 130–131 (TT), Lys142, Lys151, and 169–172 (FFAT) contribute to the NAD(+) site. 3 residues coordinate Zn(2+): Glu184, His247, and His264.

The protein belongs to the sugar phosphate cyclases superfamily. Dehydroquinate synthase family. It depends on Co(2+) as a cofactor. The cofactor is Zn(2+). Requires NAD(+) as cofactor.

The protein resides in the cytoplasm. It carries out the reaction 7-phospho-2-dehydro-3-deoxy-D-arabino-heptonate = 3-dehydroquinate + phosphate. It participates in metabolic intermediate biosynthesis; chorismate biosynthesis; chorismate from D-erythrose 4-phosphate and phosphoenolpyruvate: step 2/7. In terms of biological role, catalyzes the conversion of 3-deoxy-D-arabino-heptulosonate 7-phosphate (DAHP) to dehydroquinate (DHQ). The sequence is that of 3-dehydroquinate synthase from Listeria monocytogenes serotype 4a (strain HCC23).